The sequence spans 481 residues: MNVSVEAKNIGKVVQIIGPVLDVEFSADQMPNIYNAIVVEGENLAGTKVSVTCEVQQLLGDHCVRAVSMSATDGLMRGMDVVDTGAPLTVPVGTSTLGRIFNVLGEPVDNLGDVSNEGGLPIHRPAPLFVDLDTQLSIFKTGIKVVDLLAPYRRGGKIGLFGGAGVGKTVLIMELINNIAKAHGGVSVFGGVGERTREGNDLYAEMKESKVINEDNLSESKVALVYGQMNEPPGARMRVGLTALTMAEYFRDINKQDVLLFIDNIFRFVQAGSEVSALLGRMPSAVGYQPTLATEMGGLQERITSTKDGSITSIQAVYVPADDLTDPAPATTFAHLDATTVLSRNLAAKGIYPAVDPLDSTSTMLQPQTLGEEHYGCAQAVKTTLQRYKELQDIIAILGLDELSDEDRLVVARARKIERFLSQPFFVAEVFTGSPGKYVSLSETIQGFSQILTGELDDLPEQSFYLVGNLDEAIAKAATLG.

162-169 (GGAGVGKT) lines the ATP pocket.

Belongs to the ATPase alpha/beta chains family. In terms of assembly, F-type ATPases have 2 components, CF(1) - the catalytic core - and CF(0) - the membrane proton channel. CF(1) has five subunits: alpha(3), beta(3), gamma(1), delta(1), epsilon(1). CF(0) has four main subunits: a(1), b(1), b'(1) and c(9-12).

The protein localises to the plastid. The protein resides in the chloroplast thylakoid membrane. It carries out the reaction ATP + H2O + 4 H(+)(in) = ADP + phosphate + 5 H(+)(out). In terms of biological role, produces ATP from ADP in the presence of a proton gradient across the membrane. The catalytic sites are hosted primarily by the beta subunits. In Oltmannsiellopsis viridis (Marine flagellate), this protein is ATP synthase subunit beta, chloroplastic.